Consider the following 1819-residue polypeptide: Non-reducing polyketide synthase 8 (1819 aa).

In terms of domain architecture, Starter acyltransferase (SAT) spans 38–265 (QLTLLSKQKQ…QKIINLPVYG (228 aa)). Residues 405-840 (KSSIAIVGMS…GGNTMIAIEE (436 aa)) form the Ketosynthase family 3 (KS3) domain. Catalysis depends on for beta-ketoacyl synthase activity residues cysteine 578, histidine 714, and histidine 758. In terms of domain architecture, Malonyl-CoA:ACP transacylase (MAT) spans 943–1262 (FAFTGQGASY…SLSTLHCAGA (320 aa)). The tract at residues 1336-1476 (QRIIEESFDG…GDRSAWLSSW (141 aa)) is N-terminal hotdog fold. The PKS/mFAS DH domain occupies 1336–1646 (QRIIEESFDG…FRQYPRILLN (311 aa)). The active-site Proton acceptor; for dehydratase activity is the histidine 1368. The segment at 1404–1642 (AMNVADLEVV…GGIKFRQYPR (239 aa)) is dehydratase (DH) domain. Positions 1498-1646 (IANRLSHNMA…FRQYPRILLN (149 aa)) are C-terminal hotdog fold. The Proton donor; for dehydratase activity role is filled by aspartate 1557. One can recognise a Carrier domain in the interval 1741–1818 (VDTNSVASKA…DLRSWLMEYY (78 aa)). Serine 1778 is subject to O-(pantetheine 4'-phosphoryl)serine.

Pantetheine 4'-phosphate is required as a cofactor.

It participates in secondary metabolite biosynthesis. Functionally, non-reducing polyketide synthase; part of the gene cluster that mediates the biosynthesis of dibenzodioxocinones such as pestalotiollide B, a novel class of inhibitors against cholesterol ester transfer protein (CEPT). The biosynthesis initiates from condensation of acetate and malonate units catalyzed by the non-reducing PKS pks8/GME11356. Pks8/GME11356 lacks a thioesterase (TE) domain, which is important to the cyclizing of the third ring of atrochrysone carboxylic acid, and the esterase GME11355 might play the role of TE and catalyzes the cyclization reaction of the C ring. The lactamase-like protein GME11357 (or other beta-lactamases in Pestalotiopsis microspora) probably hydrolyzes the thioester bond between the ACP of pks8/GME11356 and the intermediate to release atrochrysone carboxylic acid, which is spontaneously dehydrates to form endocrocin anthrone. Endocrocin anthrone is further converted to emodin via the endocrocin intermediate. Emodin is then oxidized by several enzymes such as the Baeyer-Villiger oxidase GME11358, the oxidoreductase GME11367, the short chain dehydrogenase/reductase GME11373, as well as by other oxidoreductases from the cluster, to modify the A and C rings and open the B ring, and finally yield monodictyphenone. The prenyltransferase GME11375 may catalyze the addition reaction between the C5 side chains and the carbon bone of dibenzodioxocinones. The remaining biochemical reactions to the final product dibenzodioxocinones should be methylation catalyzed by methyltransferase GME11366 and reduction and lactonization reaction catalyzed by a series of oxidordeuctases. The chain is Non-reducing polyketide synthase 8 from Pestalotiopsis microspora.